The sequence spans 204 residues: Outer-membrane lipoprotein LolB (204 aa).

A signal peptide spans 1–20 (MLRSRRLALLCLATPLWLAA). Residue Cys-21 is the site of N-palmitoyl cysteine attachment. Cys-21 carries the S-diacylglycerol cysteine lipid modification. The tract at residues 131-150 (GRAAPGTPSNVTRDANGRPD) is disordered.

The protein belongs to the LolB family. As to quaternary structure, monomer.

The protein resides in the cell outer membrane. Functionally, plays a critical role in the incorporation of lipoproteins in the outer membrane after they are released by the LolA protein. This Cupriavidus metallidurans (strain ATCC 43123 / DSM 2839 / NBRC 102507 / CH34) (Ralstonia metallidurans) protein is Outer-membrane lipoprotein LolB.